The sequence spans 213 residues: Ras-related protein Rab-4B (213 aa).

An N-acetylalanine modification is found at alanine 2. Glycine 18, threonine 19, glycine 20, lysine 21, serine 22, and cysteine 23 together coordinate GDP. GTP-binding residues include glycine 18, threonine 19, glycine 20, lysine 21, serine 22, cysteine 23, serine 37, histidine 39, and threonine 40. Residue serine 22 participates in Mg(2+) binding. The short motif at 39–44 (HTIGVE) is the Switch 1 element. Residues threonine 40 and aspartate 63 each contribute to the Mg(2+) site. The short motif at 65–74 (AGQERFRSVT) is the Switch 2 element. Residue glycine 66 coordinates GTP. Glutamine 67 carries the post-translational modification 5-glutamyl serotonin. Residues asparagine 121, lysine 122, aspartate 124, alanine 152, and leucine 153 each coordinate GDP. GTP-binding residues include asparagine 121, lysine 122, aspartate 124, alanine 152, and leucine 153. Serine 185 and serine 193 each carry phosphoserine. Residues cysteine 211 and cysteine 213 are each lipidated (S-geranylgeranyl cysteine). At cysteine 213 the chain carries Cysteine methyl ester.

Belongs to the small GTPase superfamily. Rab family. As to quaternary structure, interacts (GTP-bound form) with RUFY1; the interaction allows endosomal tethering and fusion. Requires Mg(2+) as cofactor. In terms of processing, serotonylation of Gln-67 by TGM2 during activation and aggregation of platelets leads to constitutive activation of GTPase activity.

It is found in the cell membrane. Its subcellular location is the early endosome membrane. It carries out the reaction GTP + H2O = GDP + phosphate + H(+). Its activity is regulated as follows. Regulated by guanine nucleotide exchange factors (GEFs) which promote the exchange of bound GDP for free GTP. Regulated by GTPase activating proteins (GAPs) which increase the GTP hydrolysis activity. Inhibited by GDP dissociation inhibitors (GDIs). The small GTPases Rab are key regulators of intracellular membrane trafficking, from the formation of transport vesicles to their fusion with membranes. Rabs cycle between an inactive GDP-bound form and an active GTP-bound form that is able to recruit to membranes different set of downstream effectors directly responsible for vesicle formation, movement, tethering and fusion. RAB4B mediates endosomal tethering and fusion through the interaction with RUFY1 and RAB14. Acts as a regulator of platelet alpha-granule release during activation and aggregation of platelets. This chain is Ras-related protein Rab-4B, found in Mus musculus (Mouse).